Here is a 334-residue protein sequence, read N- to C-terminus: Protein-methionine-sulfoxide reductase catalytic subunit MsrP (334 aa).

A signal peptide (tat-type signal) is located at residues 1 to 44 (MKKNQFLKESDVTAESVFFMKRRQVLKALGISAAAFSLPHAAHA). Mo-molybdopterin-binding positions include Asn-88, 91 to 92 (YE), Cys-146, Thr-181, Asn-233, Arg-238, and 249 to 251 (GIK).

Belongs to the MsrP family. Heterodimer of a catalytic subunit (MsrP) and a heme-binding subunit (MsrQ). Mo-molybdopterin is required as a cofactor. Post-translationally, predicted to be exported by the Tat system. The position of the signal peptide cleavage has not been experimentally proven.

It localises to the periplasm. The catalysed reaction is L-methionyl-[protein] + a quinone + H2O = L-methionyl-(S)-S-oxide-[protein] + a quinol. It carries out the reaction L-methionyl-[protein] + a quinone + H2O = L-methionyl-(R)-S-oxide-[protein] + a quinol. In terms of biological role, part of the MsrPQ system that repairs oxidized periplasmic proteins containing methionine sulfoxide residues (Met-O), using respiratory chain electrons. Thus protects these proteins from oxidative-stress damage caused by reactive species of oxygen and chlorine generated by the host defense mechanisms. MsrPQ is essential for the maintenance of envelope integrity under bleach stress, rescuing a wide series of structurally unrelated periplasmic proteins from methionine oxidation, including the primary periplasmic chaperone SurA and the lipoprotein Pal. The catalytic subunit MsrP is non-stereospecific, being able to reduce both (R-) and (S-) diastereoisomers of methionine sulfoxide. In Escherichia coli O7:K1 (strain IAI39 / ExPEC), this protein is Protein-methionine-sulfoxide reductase catalytic subunit MsrP.